Reading from the N-terminus, the 251-residue chain is MRKPFIAGNWKMYKTPVEAAGFVRELIDSLKDVSGVDVAVCPPFPALWPVKEALEGSNIALGAQNMHFEKEGAFTGEVSPAMLQDIGVKYVILGHSERRAYFGETDELINQKIKAAFTWGLNPIFCVGETLEERERGITKAVVEIQVLKGLAGVTAEQAENLTIAYEPVWAIGTGKTATPDDAQEVCQFIRELLVKLFGREIADKVRIQYGGSVKPENIKELIAKPDIDGALVGGASLKVESFTAIVKGSI.

9–11 is a binding site for substrate; the sequence is NWK. H95 functions as the Electrophile in the catalytic mechanism. E167 (proton acceptor) is an active-site residue. Residues G173, S213, and 234–235 contribute to the substrate site; that span reads GG.

The protein belongs to the triosephosphate isomerase family. In terms of assembly, homodimer.

It is found in the cytoplasm. The catalysed reaction is D-glyceraldehyde 3-phosphate = dihydroxyacetone phosphate. The protein operates within carbohydrate biosynthesis; gluconeogenesis. It participates in carbohydrate degradation; glycolysis; D-glyceraldehyde 3-phosphate from glycerone phosphate: step 1/1. In terms of biological role, involved in the gluconeogenesis. Catalyzes stereospecifically the conversion of dihydroxyacetone phosphate (DHAP) to D-glyceraldehyde-3-phosphate (G3P). This Carboxydothermus hydrogenoformans (strain ATCC BAA-161 / DSM 6008 / Z-2901) protein is Triosephosphate isomerase.